The following is a 178-amino-acid chain: Crossover junction endodeoxyribonuclease RuvC (178 aa).

Residues Asp-7, Glu-68, and Asp-141 contribute to the active site. Residues Asp-7, Glu-68, and Asp-141 each contribute to the Mg(2+) site.

It belongs to the RuvC family. In terms of assembly, homodimer which binds Holliday junction (HJ) DNA. The HJ becomes 2-fold symmetrical on binding to RuvC with unstacked arms; it has a different conformation from HJ DNA in complex with RuvA. In the full resolvosome a probable DNA-RuvA(4)-RuvB(12)-RuvC(2) complex forms which resolves the HJ. Mg(2+) is required as a cofactor.

Its subcellular location is the cytoplasm. The catalysed reaction is Endonucleolytic cleavage at a junction such as a reciprocal single-stranded crossover between two homologous DNA duplexes (Holliday junction).. The RuvA-RuvB-RuvC complex processes Holliday junction (HJ) DNA during genetic recombination and DNA repair. Endonuclease that resolves HJ intermediates. Cleaves cruciform DNA by making single-stranded nicks across the HJ at symmetrical positions within the homologous arms, yielding a 5'-phosphate and a 3'-hydroxyl group; requires a central core of homology in the junction. The consensus cleavage sequence is 5'-(A/T)TT(C/G)-3'. Cleavage occurs on the 3'-side of the TT dinucleotide at the point of strand exchange. HJ branch migration catalyzed by RuvA-RuvB allows RuvC to scan DNA until it finds its consensus sequence, where it cleaves and resolves the cruciform DNA. The chain is Crossover junction endodeoxyribonuclease RuvC from Parafrankia sp. (strain EAN1pec).